The primary structure comprises 246 residues: tRNA pseudouridine synthase A (246 aa).

Residue D52 is the Nucleophile of the active site. Position 111 (Y111) interacts with substrate.

It belongs to the tRNA pseudouridine synthase TruA family. In terms of assembly, homodimer.

The catalysed reaction is uridine(38/39/40) in tRNA = pseudouridine(38/39/40) in tRNA. In terms of biological role, formation of pseudouridine at positions 38, 39 and 40 in the anticodon stem and loop of transfer RNAs. This Borrelia garinii subsp. bavariensis (strain ATCC BAA-2496 / DSM 23469 / PBi) (Borreliella bavariensis) protein is tRNA pseudouridine synthase A.